The chain runs to 434 residues: ATP-dependent protease ATPase subunit HslU (434 aa).

Residues Ile-18, 60–65, Asp-247, Glu-312, and Arg-384 contribute to the ATP site; that span reads GVGKTE.

This sequence belongs to the ClpX chaperone family. HslU subfamily. As to quaternary structure, a double ring-shaped homohexamer of HslV is capped on each side by a ring-shaped HslU homohexamer. The assembly of the HslU/HslV complex is dependent on binding of ATP.

The protein resides in the cytoplasm. Functionally, ATPase subunit of a proteasome-like degradation complex; this subunit has chaperone activity. The binding of ATP and its subsequent hydrolysis by HslU are essential for unfolding of protein substrates subsequently hydrolyzed by HslV. HslU recognizes the N-terminal part of its protein substrates and unfolds these before they are guided to HslV for hydrolysis. This chain is ATP-dependent protease ATPase subunit HslU, found in Brucella suis (strain ATCC 23445 / NCTC 10510).